Reading from the N-terminus, the 109-residue chain is Large ribosomal subunit protein uL22 (109 aa).

This sequence belongs to the universal ribosomal protein uL22 family. In terms of assembly, part of the 50S ribosomal subunit.

Its function is as follows. This protein binds specifically to 23S rRNA; its binding is stimulated by other ribosomal proteins, e.g. L4, L17, and L20. It is important during the early stages of 50S assembly. It makes multiple contacts with different domains of the 23S rRNA in the assembled 50S subunit and ribosome. Functionally, the globular domain of the protein is located near the polypeptide exit tunnel on the outside of the subunit, while an extended beta-hairpin is found that lines the wall of the exit tunnel in the center of the 70S ribosome. This Leptothrix cholodnii (strain ATCC 51168 / LMG 8142 / SP-6) (Leptothrix discophora (strain SP-6)) protein is Large ribosomal subunit protein uL22.